The following is a 228-amino-acid chain: LexA repressor (228 aa).

Positions 26-46 form a DNA-binding region, H-T-H motif; sequence FDEMKEALDLRSKSGIHRLIT. Catalysis depends on for autocatalytic cleavage activity residues Ser149 and Lys187.

This sequence belongs to the peptidase S24 family. Homodimer.

It carries out the reaction Hydrolysis of Ala-|-Gly bond in repressor LexA.. Functionally, represses a number of genes involved in the response to DNA damage (SOS response), including recA and lexA. In the presence of single-stranded DNA, RecA interacts with LexA causing an autocatalytic cleavage which disrupts the DNA-binding part of LexA, leading to derepression of the SOS regulon and eventually DNA repair. This Jannaschia sp. (strain CCS1) protein is LexA repressor.